Reading from the N-terminus, the 125-residue chain is Small ribosomal subunit protein uS13 (125 aa).

It belongs to the universal ribosomal protein uS13 family. In terms of assembly, part of the 30S ribosomal subunit. Forms a loose heterodimer with protein S19. Forms two bridges to the 50S subunit in the 70S ribosome.

Located at the top of the head of the 30S subunit, it contacts several helices of the 16S rRNA. In the 70S ribosome it contacts the 23S rRNA (bridge B1a) and protein L5 of the 50S subunit (bridge B1b), connecting the 2 subunits; these bridges are implicated in subunit movement. Contacts the tRNAs in the A and P-sites. In Granulibacter bethesdensis (strain ATCC BAA-1260 / CGDNIH1), this protein is Small ribosomal subunit protein uS13.